Here is a 137-residue protein sequence, read N- to C-terminus: Small ribosomal subunit protein uS19 (137 aa).

It belongs to the universal ribosomal protein uS19 family.

In terms of biological role, protein S19 forms a complex with S13 that binds strongly to the 16S ribosomal RNA. The sequence is that of Small ribosomal subunit protein uS19 from Methanoculleus marisnigri (strain ATCC 35101 / DSM 1498 / JR1).